Reading from the N-terminus, the 122-residue chain is MDEEHNIIMVTTNYIPGKKITRIIGTIWGITVRSRGLGGNIVAGLRSLAGGEIKEYSKMLSDTRNTAMERLRDAAEQVGANAVIELRFDSSDIGQVMTEIVAYGTAVVVEDVSSDIQRVGLS.

This sequence belongs to the UPF0145 family.

The chain is UPF0145 protein TV0671 from Thermoplasma volcanium (strain ATCC 51530 / DSM 4299 / JCM 9571 / NBRC 15438 / GSS1).